Consider the following 320-residue polypeptide: Aspartate carbamoyltransferase catalytic subunit (320 aa).

Arginine 57 and threonine 58 together coordinate carbamoyl phosphate. Lysine 85 serves as a coordination point for L-aspartate. Positions 107, 141, and 144 each coordinate carbamoyl phosphate. L-aspartate is bound by residues arginine 174 and arginine 228. Carbamoyl phosphate is bound by residues glycine 269 and proline 270.

It belongs to the aspartate/ornithine carbamoyltransferase superfamily. ATCase family. In terms of assembly, heterododecamer (2C3:3R2) of six catalytic PyrB chains organized as two trimers (C3), and six regulatory PyrI chains organized as three dimers (R2).

The enzyme catalyses carbamoyl phosphate + L-aspartate = N-carbamoyl-L-aspartate + phosphate + H(+). It participates in pyrimidine metabolism; UMP biosynthesis via de novo pathway; (S)-dihydroorotate from bicarbonate: step 2/3. Functionally, catalyzes the condensation of carbamoyl phosphate and aspartate to form carbamoyl aspartate and inorganic phosphate, the committed step in the de novo pyrimidine nucleotide biosynthesis pathway. This is Aspartate carbamoyltransferase catalytic subunit from Mycobacterium ulcerans (strain Agy99).